The sequence spans 644 residues: Interleukin-23 receptor (644 aa).

The signal sequence occupies residues 1–23 (MSHLTLQLHVVIALYVLFRWCHG). At 24–374 (GITSINCSGD…PASGNHQDIG (351 aa)) the chain is on the extracellular side. N-linked (GlcNAc...) asparagine glycans are attached at residues N47, N130, and N232. Fibronectin type-III domains follow at residues 127-217 (APSN…LDDI) and 219-318 (IPSA…TSQE). The chain crosses the membrane as a helical span at residues 375–395 (LLSGMVFLAIMLPIFSLIGIF). At 396–644 (NRSLRIGIKR…HFSRISLFQK (249 aa)) the chain is on the cytoplasmic side.

It belongs to the type I cytokine receptor family. Type 2 subfamily. In terms of assembly, heterodimer with IL12RB1. In presence of IL23, the heterodimer forms the IL23 receptor. Interacts with JAK2 and in presence of IL23 with STAT3. In terms of processing, phosphorylated in response to IL23. As to expression, expressed by Th1, Th2 and dendritic cells.

The protein resides in the cell membrane. Functionally, associates with IL12RB1 to form the interleukin-23 receptor. Binds IL23 and mediates T-cells, NK cells and possibly certain macrophage/myeloid cells stimulation probably through activation of the Jak-Stat signaling cascade. IL23 functions in innate and adaptive immunity and may participate in acute response to infection in peripheral tissues. IL23 may be responsible for autoimmune inflammatory diseases and be important for tumorigenesis. In Mus musculus (Mouse), this protein is Interleukin-23 receptor (Il23r).